Reading from the N-terminus, the 604-residue chain is Testis-expressed protein 13C-1 (604 aa).

Disordered stretches follow at residues 314 to 337 (EGEG…SHKD), 374 to 397 (PVMP…RPKI), 485 to 523 (CLNA…HPRK), and 538 to 580 (ATKQ…SANC). The span at 322–333 (QGTSLHGDSSNN) shows a compositional bias: polar residues. Positions 544-572 (KQPEGIKSLESKQPQETKSSESKQQEKPL) are enriched in basic and acidic residues.

Belongs to the TEX13 family.

Its function is as follows. Plays a role in transcriptional repression. The sequence is that of Testis-expressed protein 13C-1 from Mus musculus (Mouse).